We begin with the raw amino-acid sequence, 535 residues long: Flavin-containing monooxygenase iboF (535 aa).

Residues 1–24 (MFSLRPTALVSLSVVLFSIQETLS) form the signal peptide. 60 to 65 (GAGPSG) contributes to the FAD binding site. Residues Asn-134, Asn-243, and Asn-300 are each glycosylated (N-linked (GlcNAc...) asparagine). 307 to 312 (GAAASG) provides a ligand contact to NADP(+). Asn-356, Asn-382, and Asn-410 each carry an N-linked (GlcNAc...) asparagine glycan.

It belongs to the FMO family. FAD serves as cofactor.

It functions in the pathway secondary metabolite biosynthesis. Its function is as follows. Flavin-containing monooxygenase; part of the gene cluster that mediates the biosynthesis of the psychoactive metabolites ibotenic acid and muscimol. The first committed step is glutamate hydroxylation by the 2-oxoglutarate-dependent dioxygenase iboH, and the last step is decarboxylation of ibotenic acid to muscimol by the decarboxylase iboD. The order of the intermediate reactions is somewhat ambiguous. IboA likely activates the carboxylic acid at position 5 to introduce an amide bond, and the flavin monooxygenase iboF generates the N-O bond. There are several options for the latter step. One option is that iboF directly hydroxylates the amide nitrogen formed by iboA to produce a hydroxamic acid species. Another option is that iboF hydroxylates an external N-containing compound, whose resulting N-O bond is subsequently introduced into the hydroxyglutamate scaffold. The paralogous PLP-dependent cystathionine gamma-synthase-like enzymes iboG1 and iboG2 are likely involved in substitution of the OH group at position 3 by the O-N moiety. The first cyclic intermediate is most probably tricholomic acid which is likely desaturated to ibotenic acid by the cytochrome P450 monooxygenase iboC. The protein is Flavin-containing monooxygenase iboF of Amanita muscaria (strain Koide BX008).